Here is a 383-residue protein sequence, read N- to C-terminus: Probable cell wall hydrolase LytN (383 aa).

Residues 1–49 form the signal peptide; that stretch reads MFIYYCKECSIMNKQQSKVRYSIRKVSIGILSISIGMFLALGMSNKAYA. One can recognise a LysM domain in the interval 175-219; that stretch reads QIYTVKKGDTLSAIALKYKTTVSNIQNTNNIANPNLIFIGQKLKV. Residues 241-378 form the Peptidase C51 domain; that stretch reads NSSTLNYLKT…NYENDMIFIR (138 aa).

The protein localises to the secreted. Probably involved in peptidoglycan hydrolysis. This Staphylococcus aureus (strain Mu50 / ATCC 700699) protein is Probable cell wall hydrolase LytN (lytN).